Here is a 1264-residue protein sequence, read N- to C-terminus: Box A-binding factor (1264 aa).

The segment covering 1 to 11 has biased composition (basic and acidic residues); the sequence is MTKTTKPKEKA. Disordered regions lie at residues 1-25, 161-200, 234-253, 405-463, 523-585, and 599-627; these read MTKTTKPKEKAAAGGAVIGSGSGLG, TASDTAATSEAAIDDDPSAINTNNNNNNSKAQNDASESVK, LISHHQQEQHQQAQQQQHQQ, QLHQ…HALS, NQTQ…SAAT, and HNSSLEDGYGSPRSSHSGGGGGGTLPAFQ. The span at 16-25 shows a compositional bias: gly residues; it reads AVIGSGSGLG. Low complexity predominate over residues 161 to 171; the sequence is TASDTAATSEA. Positions 189–198 are enriched in polar residues; the sequence is SKAQNDASES. A compositionally biased stretch (basic residues) spans 409 to 421; that stretch reads QQHHHQQQLHHHQ. Composition is skewed to low complexity over residues 422–438, 447–459, and 523–554; these read QQQQQLYHQQQQQQQQQ, STSSAGGDSPSSS, and NQTQAHLQQQHHQQQQQQHQQHQQQQLQQQQQ. Residues 555–564 show a composition bias toward basic residues; sequence QHHHNQHQHH. Low complexity-rich tracts occupy residues 565–585 and 599–614; these read NSSSSSPGPAGLHHSSSSAAT and HNSSLEDGYGSPRSSH. Residues 803-827 form a GATA-type zinc finger; sequence CSNCHTTHTSLWRRNPAGEPVCNAC. Disordered regions lie at residues 841–867, 899–1048, and 1181–1202; these read TMKKDTIQKRKRKPKGTKSEKSKSKSK, DDMK…SNEN, and EEMDQSQQQQQQQQHQQQQHGE. Composition is skewed to low complexity over residues 909–950 and 985–1007; these read PYNS…GSTS and QMSPLNMQQHQQQQSCSMQHSPS. A compositionally biased stretch (polar residues) spans 1008-1023; it reads TPTSIFNTPSPTHQLH. Composition is skewed to low complexity over residues 1024–1048 and 1185–1200; these read NNNNNNNNSSIFNNNNNNNSSSNEN and QSQQQQQQQQHQQQQH. 2 positions are modified to phosphoserine: serine 1208 and serine 1210.

Interacts (via GATA-type Zn-finger domain) with Bfc; this interaction enhances srp binding to the promoter of crq/croquemort.

The protein localises to the nucleus. Its function is as follows. May function as a transcriptional activator protein and may play a key role in the organogenesis of the fat body. Binds a sequence element (5'-[TA]GATAA-3') found in the larval promoters of all known alcohol dehydrogenase (ADH) genes. Acts as a homeotic gene downstream of the terminal gap gene HKB to promote morphogenesis and differentiation of anterior and posterior midgut. Together with transcriptional cofactor Bfc directly binds the promoter of phagocytic receptor crq/croquemort to upregulate its expression and stimulate efferocytosis in response to apoptotic cells, including during embryogenesis. This is Box A-binding factor (srp) from Drosophila melanogaster (Fruit fly).